Reading from the N-terminus, the 474-residue chain is tRNA-2-methylthio-N(6)-dimethylallyladenosine synthase (474 aa).

An MTTase N-terminal domain is found at 3–120; that stretch reads KKLHIKTWGC…LPEMINSVRG (118 aa). The [4Fe-4S] cluster site is built by cysteine 12, cysteine 49, cysteine 83, cysteine 157, cysteine 161, and cysteine 164. The region spanning 143–375 is the Radical SAM core domain; it reads RADGPTAFVS…QDRINQQTTA (233 aa). The 64-residue stretch at 378–441 folds into the TRAM domain; that stretch reads RRKLGTVQRI…ANSLRGMLLR (64 aa).

Belongs to the methylthiotransferase family. MiaB subfamily. Monomer. [4Fe-4S] cluster serves as cofactor.

It is found in the cytoplasm. The enzyme catalyses N(6)-dimethylallyladenosine(37) in tRNA + (sulfur carrier)-SH + AH2 + 2 S-adenosyl-L-methionine = 2-methylsulfanyl-N(6)-dimethylallyladenosine(37) in tRNA + (sulfur carrier)-H + 5'-deoxyadenosine + L-methionine + A + S-adenosyl-L-homocysteine + 2 H(+). Its function is as follows. Catalyzes the methylthiolation of N6-(dimethylallyl)adenosine (i(6)A), leading to the formation of 2-methylthio-N6-(dimethylallyl)adenosine (ms(2)i(6)A) at position 37 in tRNAs that read codons beginning with uridine. In Erwinia tasmaniensis (strain DSM 17950 / CFBP 7177 / CIP 109463 / NCPPB 4357 / Et1/99), this protein is tRNA-2-methylthio-N(6)-dimethylallyladenosine synthase.